A 398-amino-acid polypeptide reads, in one-letter code: tRNA-specific 2-thiouridylase MnmA (398 aa).

ATP is bound by residues 20 to 27 (AMSGGVDS) and Leu-46. Cys-114 acts as the Nucleophile in catalysis. A disulfide bridge connects residues Cys-114 and Cys-210. Position 138 (Gly-138) interacts with ATP. Residues 160 to 162 (RDQ) form an interaction with tRNA region. Cys-210 acts as the Cysteine persulfide intermediate in catalysis.

The protein belongs to the MnmA/TRMU family.

The protein resides in the cytoplasm. The catalysed reaction is S-sulfanyl-L-cysteinyl-[protein] + uridine(34) in tRNA + AH2 + ATP = 2-thiouridine(34) in tRNA + L-cysteinyl-[protein] + A + AMP + diphosphate + H(+). Its function is as follows. Catalyzes the 2-thiolation of uridine at the wobble position (U34) of tRNA, leading to the formation of s(2)U34. In Brucella abortus (strain S19), this protein is tRNA-specific 2-thiouridylase MnmA.